Reading from the N-terminus, the 172-residue chain is Dehydratase cfoI (172 aa).

Active-site residues include histidine 86 and histidine 111.

The protein belongs to the scytalone dehydratase family. As to quaternary structure, homotrimer. Each subunit contains an active site, located in the central part of the hydrophobic core of the monomer, which functions independently.

It functions in the pathway secondary metabolite biosynthesis; flavonoid biosynthesis. Cytochrome P450 monooxygenase; part of the gene cluster that mediates the biosynthesis of chlorflavonin, a fungal flavonoid with acetolactate synthase inhibitory activity. Within the pathway, cfoI is responsible for the hydroxylation of the flavonoid skeleton at position C3 with cfoF. The pathway begins with the PKS-NRPS hybrid synthetase cfoA that uses benzoic acid or p-hydroxybenzoic acid as a starter unit with four rounds of chain elongation using malonyl-CoA to form the chalcone skeleton. Then, a new type of chalcone isomerase, cfoK, catalyzes the conversion of the chalcone into a flavanone by a histidine-mediated oxa-Michael addition mechanism. The desaturation of flavanone to flavone is catalyzed by a new type of flavone synthase, the flavin mononucleotide (FMN)-dependent oxidoreductase cfoJ. Monooxygenases cfoF, cfoG, and P450 cfoH are responsible for the hydroxylation of the flavonoid skeleton at sites C3, C8, and C2', respectively. Like cfoF, the dehydratase cfoI plays also a role in the hydroxylation of position C3. Methyltransferases cfoB, cfoC, and cfoD then catalyze the methylation of C7-OH, C8-OH, and C3-OH, respectively. Finally, the monooxygenase cfoE is responsible for the chlorination of flavonoid at position C3'. This Aspergillus candidus protein is Dehydratase cfoI.